Reading from the N-terminus, the 128-residue chain is 3-aminoacrylate deaminase RutC (128 aa).

Belongs to the RutC family.

It catalyses the reaction (Z)-3-aminoacrylate + H2O + H(+) = 3-oxopropanoate + NH4(+). Functionally, involved in pyrimidine catabolism. Catalyzes the deamination of 3-aminoacrylate to malonic semialdehyde, a reaction that can also occur spontaneously. RutC may facilitate the reaction and modulate the metabolic fitness, rather than catalyzing essential functions. This Serratia proteamaculans (strain 568) protein is 3-aminoacrylate deaminase RutC.